Consider the following 287-residue polypeptide: MPRLLPISAATLALAQLTYGWGNLGHETVAYIAQSFVASSTESFCQNILGDDSTSYLANVATWADTYKYTDAGEFSKPYHFIDAQDNPPQSCGVDYDRDCGSAGCSISAIQNYTNILLESPNGSEALNALKFVVHIIGDIHQPLHDENLEAGGNGIDVTYDGETTNLHHIWDTNMPEEAAGGYSLSVAKTYADLLTERIKTGTYSSKKDSWTDGIDIKDPVSTSMIWAADANTYVCSTVLDDGLAYINSTDLSGEYYDKSQPVFEELIAKAGYRLAAWLDLIASQPS.

The signal sequence occupies residues 1–20 (MPRLLPISAATLALAQLTYG). A divalent metal cation is bound by residues Trp-21, His-26, Asp-65, and His-80. Residues 21–26 (WGNLGH), 65–71 (DTYKYTD), 80–83 (HFID), and 93–98 (GVDYDR) each bind substrate. 2 cysteine pairs are disulfide-bonded: Cys-92-Cys-236 and Cys-100-Cys-105. N-linked (GlcNAc...) asparagine glycosylation is found at Asn-112 and Asn-122. The a divalent metal cation site is built by His-135, Asp-139, His-145, His-168, and Asp-172. The segment at 135-183 (HIIGDIHQPLHDENLEAGGNGIDVTYDGETTNLHHIWDTNMPEEAAGGY) is substrate binding. A glycan (N-linked (GlcNAc...) asparagine) is linked at Asn-248.

The protein belongs to the nuclease type I family. Monomer. Zn(2+) serves as cofactor.

It catalyses the reaction Endonucleolytic cleavage to 5'-phosphomononucleotide and 5'-phosphooligonucleotide end-products.. With respect to regulation, inhibited by inorganic phosphate (Pi). Hydrolyzes only single-stranded DNA and RNA without apparent specificity for bases. The protein is Nuclease S1 of Aspergillus oryzae (strain ATCC 42149 / RIB 40) (Yellow koji mold).